Here is an 85-residue protein sequence, read N- to C-terminus: Elongation factor 1-beta (85 aa).

It belongs to the EF-1-beta/EF-1-delta family.

In terms of biological role, promotes the exchange of GDP for GTP in EF-1-alpha/GDP, thus allowing the regeneration of EF-1-alpha/GTP that could then be used to form the ternary complex EF-1-alpha/GTP/AAtRNA. In Methanoregula boonei (strain DSM 21154 / JCM 14090 / 6A8), this protein is Elongation factor 1-beta.